The following is a 246-amino-acid chain: 2-deoxyglucose-6-phosphate phosphatase 2 (246 aa).

Residue D83 is the Nucleophile of the active site. D83 is a Mg(2+) binding site. Substrate contacts are provided by residues D83, E92, and D146–N149. D183 serves as a coordination point for Mg(2+).

Belongs to the HAD-like hydrolase superfamily. DOG/GPP family. Mg(2+) serves as cofactor.

The catalysed reaction is 2-deoxy-D-glucose 6-phosphate + H2O = 2-deoxy-D-glucose + phosphate. Functionally, phosphatase that is active on 2-deoxy-D-glucose 6-phosphate (2-DOG-6P), but not very active on fructose-1-P. This Saccharomyces cerevisiae (strain ATCC 204508 / S288c) (Baker's yeast) protein is 2-deoxyglucose-6-phosphate phosphatase 2.